A 47-amino-acid polypeptide reads, in one-letter code: Defensin-like protein 2 (47 aa).

Intrachain disulfides connect Cys-5-Cys-47, Cys-16-Cys-36, Cys-22-Cys-43, and Cys-26-Cys-45.

Belongs to the DEFL family.

Functionally, fabatins have antibacterial activity against Gram-positive and Gram-negative bacteria. High activity against P.aeruginosa. No activity against S.cerevisiae and C.albicans. In Vicia faba (Broad bean), this protein is Defensin-like protein 2.